A 363-amino-acid chain; its full sequence is Probable methyltransferase-like protein 24 (363 aa).

An N-terminal signal peptide occupies residues 1-38; it reads MGTAKPPGRGCGALPRWLLGAALLLGLRLCMELRHAGS. The segment at 37–62 is disordered; it reads GSGPPGRRDLRGPPRTHLLPAPGPLR.

This sequence belongs to the methyltransferase superfamily.

Its subcellular location is the secreted. Functionally, probable methyltransferase. The protein is Probable methyltransferase-like protein 24 (Mettl24) of Rattus norvegicus (Rat).